The following is a 357-amino-acid chain: DNA replication and repair protein RecF (357 aa).

Residue 30–37 (GANGSGKT) participates in ATP binding.

It belongs to the RecF family.

It is found in the cytoplasm. Its function is as follows. The RecF protein is involved in DNA metabolism; it is required for DNA replication and normal SOS inducibility. RecF binds preferentially to single-stranded, linear DNA. It also seems to bind ATP. This is DNA replication and repair protein RecF from Klebsiella pneumoniae subsp. pneumoniae (strain ATCC 700721 / MGH 78578).